The sequence spans 1159 residues: WASH complex subunit 5 (1159 aa).

Serine 917 carries the phosphoserine modification.

It belongs to the strumpellin family. As to quaternary structure, component of the WASH core complex also described as WASH regulatory complex (SHRC) composed of WASH (WASHC1, WASH2P or WASH3P), WASHC2 (WASHC2A or WASHC2C), WASHC3, WASHC4 and WASHC5. The WASH core complex associates via WASHC2 with the F-actin-capping protein dimer (formed by CAPZA1, CAPZA2 or CAPZA3 and CAPZB) in a transient or substoichiometric manner which was initially described as WASH complex. Interacts with VCP, PI4K2A. Expressed ubiquitously.

The protein localises to the cytoplasm. The protein resides in the cytosol. It is found in the endoplasmic reticulum. Its subcellular location is the early endosome. Its function is as follows. Acts as a component of the WASH core complex that functions as a nucleation-promoting factor (NPF) at the surface of endosomes, where it recruits and activates the Arp2/3 complex to induce actin polymerization, playing a key role in the fission of tubules that serve as transport intermediates during endosome sorting. May be involved in axonal outgrowth. Involved in cellular localization of ADRB2. Involved in cellular trafficking of BLOC-1 complex cargos such as ATP7A and VAMP7. This is WASH complex subunit 5 from Homo sapiens (Human).